Reading from the N-terminus, the 589-residue chain is Aspartate--tRNA ligase (589 aa).

Glu-174 serves as a coordination point for L-aspartate. The aspartate stretch occupies residues 198–201 (QLFK). Residue Arg-220 coordinates L-aspartate. ATP is bound by residues 220–222 (RDE) and Gln-229. His-448 provides a ligand contact to L-aspartate. Residue Glu-483 participates in ATP binding. Position 490 (Arg-490) interacts with L-aspartate. An ATP-binding site is contributed by 535–538 (GIDR).

It belongs to the class-II aminoacyl-tRNA synthetase family. Type 1 subfamily. In terms of assembly, homodimer.

It is found in the cytoplasm. The enzyme catalyses tRNA(Asp) + L-aspartate + ATP = L-aspartyl-tRNA(Asp) + AMP + diphosphate. Its function is as follows. Catalyzes the attachment of L-aspartate to tRNA(Asp) in a two-step reaction: L-aspartate is first activated by ATP to form Asp-AMP and then transferred to the acceptor end of tRNA(Asp). The sequence is that of Aspartate--tRNA ligase from Xylella fastidiosa (strain M23).